We begin with the raw amino-acid sequence, 210 residues long: 3-hexulose-6-phosphate synthase (210 aa).

This sequence belongs to the HPS/KGPDC family. HPS subfamily.

The catalysed reaction is D-ribulose 5-phosphate + formaldehyde = D-arabino-hex-3-ulose 6-phosphate. It participates in one-carbon metabolism; formaldehyde assimilation via RuMP pathway; D-fructose 6-phosphate from D-ribulose 5-phosphate and formaldehyde: step 1/2. Catalyzes the condensation of ribulose 5-phosphate with formaldehyde to form 3-hexulose 6-phosphate. The protein is 3-hexulose-6-phosphate synthase of Staphylococcus aureus (strain MRSA252).